We begin with the raw amino-acid sequence, 386 residues long: Trichocyst matrix protein T2-A (386 aa).

Residues 1-19 (MKTVILALALIVLASSTQA) form the signal peptide. Residues 20-48 (DVIATIKKIDQSPFGRTLFDTIYLELQTG) constitute a propeptide that is removed on maturation. Residues 51–154 (LDRLLSTLTD…AEEHEDFEEK (104 aa)) are a coiled coil. The propeptide occupies 184–238 (KGKATKQTHKFTKEVASMIQKHFTTSAKKTAKFQHRKGYSKLFKAFATIASKVEQ). Positions 293–332 (SALANATSDLASLNDIIAQVEASLDTTEQRIENVSADRHD) form a coiled coil.

Belongs to the TMP family.

It is found in the trichocyst. Functionally, structural protein that crystallize inside the trichocyst matrix. This chain is Trichocyst matrix protein T2-A (T2A), found in Paramecium tetraurelia.